We begin with the raw amino-acid sequence, 123 residues long: Large ribosomal subunit protein uL18 (123 aa).

This sequence belongs to the universal ribosomal protein uL18 family. As to quaternary structure, part of the 50S ribosomal subunit; part of the 5S rRNA/L5/L18/L25 subcomplex. Contacts the 5S and 23S rRNAs.

In terms of biological role, this is one of the proteins that bind and probably mediate the attachment of the 5S RNA into the large ribosomal subunit, where it forms part of the central protuberance. The chain is Large ribosomal subunit protein uL18 from Bifidobacterium animalis subsp. lactis (strain AD011).